Reading from the N-terminus, the 664-residue chain is Protein-arginine deiminase type-3 (664 aa).

It belongs to the protein arginine deiminase family. Ca(2+) serves as cofactor. In terms of tissue distribution, epidermis and hair follicles.

It is found in the cytoplasm. The enzyme catalyses L-arginyl-[protein] + H2O = L-citrullyl-[protein] + NH4(+). Its function is as follows. Catalyzes the deimination of arginine residues of proteins. The protein is Protein-arginine deiminase type-3 (Padi3) of Rattus norvegicus (Rat).